Consider the following 90-residue polypeptide: UPF0298 protein YlbG (90 aa).

The protein belongs to the UPF0298 family.

It localises to the cytoplasm. In Bacillus subtilis (strain 168), this protein is UPF0298 protein YlbG (ylbG).